The primary structure comprises 132 residues: MSTKYVEAGELKEGSYVVIDGEPCRVVEIEKSKTGKHGSAKARIVAVGVFDGGKRTLSLPVDAQVEVPIIEKFTAQVLSISGDIIQLMDMRDYKTIEVPMSYVEEEAKGRLAPGAEVEVWQILDRFKIVRVK.

Lysine 36 bears the Hypusine mark.

Belongs to the eIF-5A family.

It localises to the cytoplasm. Functionally, functions by promoting the formation of the first peptide bond. This Pyrobaculum neutrophilum (strain DSM 2338 / JCM 9278 / NBRC 100436 / V24Sta) (Thermoproteus neutrophilus) protein is Translation initiation factor 5A (eIF5A).